The chain runs to 217 residues: Large ribosomal subunit protein uL3 (217 aa).

The segment at Phe131–Asp155 is disordered. Residues Ser132 to Asn145 are compositionally biased toward low complexity. The residue at position 154 (Gln154) is an N5-methylglutamine.

The protein belongs to the universal ribosomal protein uL3 family. As to quaternary structure, part of the 50S ribosomal subunit. Forms a cluster with proteins L14 and L19. Methylated by PrmB.

Its function is as follows. One of the primary rRNA binding proteins, it binds directly near the 3'-end of the 23S rRNA, where it nucleates assembly of the 50S subunit. In Nitrosomonas eutropha (strain DSM 101675 / C91 / Nm57), this protein is Large ribosomal subunit protein uL3.